The chain runs to 557 residues: Neurofilament light polypeptide (557 aa).

An N-acetylserine modification is found at Ser-2. Positions 2-89 (SSYSYDPYYT…KIVRTQEKAQ (88 aa)) are head. Residues 86–396 (EKAQLQDLND…KLLEGEETRL (311 aa)) enclose the IF rod domain. The coil 1A stretch occupies residues 90-121 (LQDLNDRFANFIERVHELEQRNKVLEAELLLL). The tract at residues 122 to 134 (RQKHNEPSRLRDL) is linker 1. The interval 135–230 (YEQEVRELRL…KVHEEELAQL (96 aa)) is coil 1B. The tract at residues 231 to 248 (QSQVQYAQISLEVEVAKP) is linker 12. The tract at residues 249-267 (DLSSALRDIRAQYEKLAAK) is coil 2A. A linker 2 region spans residues 268–276 (NMQSAEDWF). A coil 2B region spans residues 277–392 (KSRFTVLTQS…AAYRKLLEGE (116 aa)). The tract at residues 393–437 (ETRLSFSGVGAITSGYTQSAPVFGRSAYSLQSSSYMTSRAFPTYY) is tail, subdomain A. A tail region spans residues 393-557 (ETRLSFSGVG…KKKKKKKKKK (165 aa)). The tail, subdomain B (acidic) stretch occupies residues 438 to 557 (SSHVQEEQLD…KKKKKKKKKK (120 aa)). The tract at residues 452 to 557 (IESSRAEEAK…KKKKKKKKKK (106 aa)) is disordered. A compositionally biased stretch (basic and acidic residues) spans 453–464 (ESSRAEEAKAEA). The segment covering 465-538 (PEEEEEEAGE…GEGEEEEEGK (74 aa)) has biased composition (acidic residues). The segment covering 539–548 (GEEPAEEESK) has biased composition (basic and acidic residues).

This sequence belongs to the intermediate filament family. As to quaternary structure, forms homodimers (in vitro).

Its subcellular location is the cell projection. It localises to the axon. The protein resides in the cytoplasm. It is found in the cytoskeleton. Functionally, neurofilaments usually contain three intermediate filament proteins: NEFL, NEFM, and NEFH which are involved in the maintenance of neuronal caliber. May additionally cooperate with other neuronal intermediate filament proteins to form neuronal filamentous networks. This is Neurofilament light polypeptide (nefl) from Xenopus tropicalis (Western clawed frog).